The chain runs to 984 residues: Hyaluronate lyase (984 aa).

Polar residues-rich tracts occupy residues M1 to K12, D19 to H32, and I54 to S66. 2 disordered regions span residues M1–H32 and D49–K68. Positions M1 to A40 are cleaved as a signal peptide. Catalysis depends on residues N429, H479, and Y488. Residues T701–T726 are compositionally biased toward basic and acidic residues. Positions T701–Q728 are disordered.

The protein belongs to the polysaccharide lyase 8 family.

The protein localises to the secreted. It catalyses the reaction [hyaluronan](n) = n 3-(4-deoxy-beta-D-gluc-4-enuronosyl)-N-acetyl-D-glucosamine + H2O. In Streptococcus agalactiae serotype III (strain NEM316), this protein is Hyaluronate lyase.